Consider the following 764-residue polypeptide: FAST kinase domain-containing protein 5, mitochondrial (764 aa).

The N-terminal 27 residues, 1–27 (MAATLKSLKLVRYRAFCSPSAFGAVRS), are a transit peptide targeting the mitochondrion. Phosphoserine is present on Ser-95. N6-acetyllysine is present on Lys-507. Residues 697–757 (LAVQFTNRNQ…RLEKLAFLHE (61 aa)) enclose the RAP domain.

It belongs to the FAST kinase family. As to quaternary structure, found in a complex with GRSF1, DDX28, DHX30 and FASTKD2. Associates with the 12S mitochondrial rRNA (12S mt-rRNA). As to expression, expression detected in spleen, thymus, testis, ovary, colon, heart, smooth muscle, kidney, brain, lung, liver and white adipose tissue with highest expression in heart, smooth muscle, liver and thyroid.

The protein localises to the mitochondrion matrix. Its subcellular location is the mitochondrion nucleoid. Functionally, plays an important role in the processing of non-canonical mitochondrial mRNA precursors. This chain is FAST kinase domain-containing protein 5, mitochondrial (FASTKD5), found in Homo sapiens (Human).